Consider the following 473-residue polypeptide: H(+)/Cl(-) exchange transporter ClcA (473 aa).

The Cytoplasmic segment spans residues 1–32 (MKTDTPSLETPQAARLRRRQLIRQLLERDKTP). Residues 33 to 69 (LAILFMAAVVGTLVGLAAVAFDKGVAWLQNQRMGALV) form a helical membrane-spanning segment. Over 70 to 76 (HTADNYP) the chain is Periplasmic. A helical membrane pass occupies residues 77-100 (LLLTVAFLCSAVLAMFGYFLVRKY). The short motif at 106-110 (GSGIP) is the Selectivity filter part_1 element. Ser-107 is a chloride binding site. Residues 109–116 (IPEIEGAL) constitute an intramembrane region (helical). Residues 117-123 (EDQRPVR) are Cytoplasmic-facing. The next 2 helical transmembrane spans lie at 124–141 (WWRVLPVKFFGGLGTLGG) and 148–166 (EGPTVQIGGNIGRMVLDVF). The short motif at 146-150 (GREGP) is the Selectivity filter part_2 element. The Cytoplasmic segment spans residues 167 to 176 (RLKGDEARHT). Intramembrane regions (helical) lie at residues 177-189 (LLATGAAAGLAAA) and 193-201 (PLAGILFII). Over 202-214 (EEMRPQFRYTLIS) the chain is Cytoplasmic. Residues 215–232 (IKAVFIGVIMSTIMYRIF) form a helical membrane-spanning segment. Residues 233 to 252 (NHEVALIDVGKLSDAPLNTL) lie on the Periplasmic side of the membrane. A helical membrane pass occupies residues 253 to 281 (WLYLILGIIFGIFGPIFNKWVLGMQDLLH). Topologically, residues 282–287 (RVHGGN) are cytoplasmic. Residues 288 to 309 (ITKWVLMGGAIGGLCGLLGFVA) form a helical membrane-spanning segment. Topologically, residues 310–329 (PATSGGGFNLIPIATAGNFS) are periplasmic. The next 2 membrane-spanning stretches (helical) occupy residues 330–349 (MGMLVFIFVARVITTLLCFS) and 355–376 (GIFAPMLALGTVLGTAFGMVAV). Residues 355–359 (GIFAP) carry the Selectivity filter part_3 motif. Positions 356 and 357 each coordinate chloride. The Periplasmic portion of the chain corresponds to 377–386 (ELFPQYHLEA). The segment at residues 387–401 (GTFAIAGMGALLAAS) is an intramembrane region (helical). Positions 402-404 (IRA) form an intramembrane region, note=Loop between two helices. The helical intramembrane region spans 405-416 (PLTGIILVLEMT). An intramembrane region (note=Loop between two helices) is located at residues 417-421 (DNYQL). Residues 422–438 (ILPMIITGLGATLLAQF) traverse the membrane as a helical segment. Residues 439-473 (TGGKPLYSAILARTLAKQEAEQLARSKAASARENT) are Cytoplasmic-facing. Tyr-445 is a binding site for chloride.

The protein belongs to the chloride channel (TC 2.A.49) family. ClcA subfamily. In terms of assembly, homodimer.

It is found in the cell inner membrane. It carries out the reaction 2 chloride(in) + H(+)(out) = 2 chloride(out) + H(+)(in). Functionally, proton-coupled chloride transporter. Functions as antiport system and exchanges two chloride ions for 1 proton. Probably acts as an electrical shunt for an outwardly-directed proton pump that is linked to amino acid decarboxylation, as part of the extreme acid resistance (XAR) response. The protein is H(+)/Cl(-) exchange transporter ClcA of Escherichia coli O45:K1 (strain S88 / ExPEC).